We begin with the raw amino-acid sequence, 288 residues long: UTP--glucose-1-phosphate uridylyltransferase (288 aa).

This sequence belongs to the UDPGP type 2 family.

The enzyme catalyses alpha-D-glucose 1-phosphate + UTP + H(+) = UDP-alpha-D-glucose + diphosphate. Its pathway is glycolipid metabolism; diglucosyl-diacylglycerol biosynthesis. In terms of biological role, catalyzes the formation of UDP-glucose from glucose-1-phosphate and UTP. This is an intermediate step in the biosynthesis of diglucosyl-diacylglycerol (Glc2-DAG), i.e. a glycolipid found in the membrane, which is also used as a membrane anchor for lipoteichoic acid (LTA). In Staphylococcus epidermidis (strain ATCC 35984 / DSM 28319 / BCRC 17069 / CCUG 31568 / BM 3577 / RP62A), this protein is UTP--glucose-1-phosphate uridylyltransferase (gtaB).